A 373-amino-acid polypeptide reads, in one-letter code: NAD-dependent protein deacylase SRT2 (373 aa).

Residues 1–47 constitute a mitochondrion transit peptide; sequence MNMRRVFGGVSTDLFPSRSMYRPLQSGGNLVMLFKGCRRFVRTTCRV. In terms of domain architecture, Deacetylase sirtuin-type spans 75 to 373; the sequence is DPPNMEDIHK…DVGSLSVPAL (299 aa). NAD(+)-binding positions include 100–120 and 179–182; these read GAGV…GAYS and QNVD. The active-site Proton acceptor is histidine 196. Zn(2+) is bound by residues cysteine 204, cysteine 207, cysteine 271, and cysteine 274. Residues 311-313, 337-339, and valine 355 each bind NAD(+); these read GSS and NIG.

It belongs to the sirtuin family. Class II subfamily. In terms of assembly, binds to the promoter region of genes influenced by ethylene. Interacts with ENAP1; this interaction is enhanced in the presence of ethylene. Requires Zn(2+) as cofactor.

It is found in the mitochondrion matrix. It localises to the nucleus. It carries out the reaction N(6)-acetyl-L-lysyl-[protein] + NAD(+) + H2O = 2''-O-acetyl-ADP-D-ribose + nicotinamide + L-lysyl-[protein]. Its function is as follows. NAD-dependent protein deacylase. Catalyzes the NAD-dependent hydrolysis of acyl groups from lysine residues. Involved in responses to ethylene leading to the transcriptional repression of some ethylene-responsive genes via the regulation of histone acetylation H3K9Ac. Negatively regulates plant basal defense against plant pathogens, possibly by suppressing salicylic acid biosynthesis. This is NAD-dependent protein deacylase SRT2 from Arabidopsis thaliana (Mouse-ear cress).